The sequence spans 299 residues: Bifunctional protein FolD (299 aa).

NADP(+) contacts are provided by residues 179 to 181 (GPG) and I245.

It belongs to the tetrahydrofolate dehydrogenase/cyclohydrolase family. As to quaternary structure, homodimer.

The catalysed reaction is (6R)-5,10-methylene-5,6,7,8-tetrahydrofolate + NADP(+) = (6R)-5,10-methenyltetrahydrofolate + NADPH. It carries out the reaction (6R)-5,10-methenyltetrahydrofolate + H2O = (6R)-10-formyltetrahydrofolate + H(+). It functions in the pathway one-carbon metabolism; tetrahydrofolate interconversion. Functionally, catalyzes the oxidation of 5,10-methylenetetrahydrofolate to 5,10-methenyltetrahydrofolate and then the hydrolysis of 5,10-methenyltetrahydrofolate to 10-formyltetrahydrofolate. This is Bifunctional protein FolD from Deinococcus radiodurans (strain ATCC 13939 / DSM 20539 / JCM 16871 / CCUG 27074 / LMG 4051 / NBRC 15346 / NCIMB 9279 / VKM B-1422 / R1).